Here is a 57-residue protein sequence, read N- to C-terminus: Small ribosomal subunit protein bS21B (57 aa).

The interval 37–57 (RYEKPSARRKRKAEAARKRRR) is disordered. Residues 43-57 (ARRKRKAEAARKRRR) show a composition bias toward basic residues.

The protein belongs to the bacterial ribosomal protein bS21 family.

This is Small ribosomal subunit protein bS21B from Gloeobacter violaceus (strain ATCC 29082 / PCC 7421).